We begin with the raw amino-acid sequence, 303 residues long: uncharacterized protein (303 aa).

This is an uncharacterized protein from Archaeoglobus fulgidus (strain ATCC 49558 / DSM 4304 / JCM 9628 / NBRC 100126 / VC-16).